We begin with the raw amino-acid sequence, 126 residues long: Small ribosomal subunit protein uS12 (126 aa).

The tract at residues 1-29 (MPTIQQLIRQPRAPKKRRSKSPALQKCPQ) is disordered. At aspartate 89 the chain carries 3-methylthioaspartic acid.

This sequence belongs to the universal ribosomal protein uS12 family. As to quaternary structure, part of the 30S ribosomal subunit. Contacts proteins S8 and S17. May interact with IF1 in the 30S initiation complex.

Its function is as follows. With S4 and S5 plays an important role in translational accuracy. Interacts with and stabilizes bases of the 16S rRNA that are involved in tRNA selection in the A site and with the mRNA backbone. Located at the interface of the 30S and 50S subunits, it traverses the body of the 30S subunit contacting proteins on the other side and probably holding the rRNA structure together. The combined cluster of proteins S8, S12 and S17 appears to hold together the shoulder and platform of the 30S subunit. This Protochlamydia amoebophila (strain UWE25) protein is Small ribosomal subunit protein uS12.